The chain runs to 249 residues: uncharacterized protein (249 aa).

It belongs to the ycf73 family.

It is found in the plastid. The protein localises to the chloroplast. This is an uncharacterized protein from Oryza sativa (Rice).